The chain runs to 167 residues: MQGDIRRKKDLLPRYKTGSKYNSRRRGGYLTTPMKKIIVYIILLCGVYFVIKVAYSDLNKETEIKLESHSSDVSASASDHTNIAAGGAADATNNKQPQQAKVPKEKFNNEVAKQQEVKNLENDLKPQIDSEKQKQINKDKKEQKQQLQKEKQDLAKENLANNEILDN.

The segment covering 1-13 has biased composition (basic and acidic residues); it reads MQGDIRRKKDLLP. Disordered regions lie at residues 1–26 and 67–167; these read MQGD…SRRR and ESHS…ILDN. Positions 71 to 80 are enriched in low complexity; the sequence is SDVSASASDH. Over residues 102 to 156 the composition is skewed to basic and acidic residues; that stretch reads VPKEKFNNEVAKQQEVKNLENDLKPQIDSEKQKQINKDKKEQKQQLQKEKQDLAK.

This is an uncharacterized protein from Saccharomyces cerevisiae (strain ATCC 204508 / S288c) (Baker's yeast).